A 478-amino-acid chain; its full sequence is Probable cytosolic Fe-S cluster assembly factor AGAP009023 (478 aa).

Positions 23, 69, 72, 75, 189, 245, 396, and 400 each coordinate [4Fe-4S] cluster.

It belongs to the NARF family.

Functionally, component of the cytosolic iron-sulfur (Fe/S) protein assembly machinery. Required for maturation of extramitochondrial Fe/S proteins. This Anopheles gambiae (African malaria mosquito) protein is Probable cytosolic Fe-S cluster assembly factor AGAP009023.